The sequence spans 469 residues: MLNIKLNIVILAAGKSTRMNSDIPKVLHLLAGKPILQYVIDTAIKLKAKCKSTNIYIVYGYKGELLQQKLAHKQKTFLHWIKQVEQSGTGHAVQQVLPFLGKDEEVLILYGDVPLISFQTLIHLLTTRSKQGLSLLTANLTNPDGYGRILYKEQEVVGIIEHQEANAQQKLISEINTGILAVSSNELKIWITKLTNNNSMNEFYLTDIIALAWQEGKKIHTIHPEKISEINGINDCAQLANLERLYQKEQAESLLRIGVIIADPNRFDLRGELKHGDNIFFDTNVLIEGQVSLGNQVTIGTGCIIKNTVIGDNVIIKPYSIIEEAHLANGSIVGPFAHLRPGSKIEENAYVGNFVEIKKSTLGKKSKVAHLSYIGDANIGKDVNIGAGTITCNYDGANKHQTIIGDNVFIGSDSQLIAPLTIGDGATIGAGTTVTSNVTSNEVIISRIRQFPIINWQRPKKKIRYNIIY.

Positions 1 to 236 are pyrophosphorylase; the sequence is MLNIKLNIVI…ISEINGINDC (236 aa). UDP-N-acetyl-alpha-D-glucosamine is bound by residues 11 to 14, Lys-25, Gln-83, 88 to 89, 110 to 112, Gly-147, Glu-161, Asn-176, and Asn-234; these read LAAG, GT, and YGD. Residue Asp-112 coordinates Mg(2+). Asn-234 serves as a coordination point for Mg(2+). Positions 237-257 are linker; sequence AQLANLERLYQKEQAESLLRI. Residues 258–469 are N-acetyltransferase; the sequence is GVIIADPNRF…KKKIRYNIIY (212 aa). The UDP-N-acetyl-alpha-D-glucosamine site is built by Arg-340 and Lys-358. His-370 functions as the Proton acceptor in the catalytic mechanism. 2 residues coordinate UDP-N-acetyl-alpha-D-glucosamine: Tyr-373 and Asn-384. Residues Ala-387, 393-394, Ser-412, Ala-430, and Arg-447 contribute to the acetyl-CoA site; that span reads NY.

In the N-terminal section; belongs to the N-acetylglucosamine-1-phosphate uridyltransferase family. The protein in the C-terminal section; belongs to the transferase hexapeptide repeat family. In terms of assembly, homotrimer. Mg(2+) serves as cofactor.

It localises to the cytoplasm. It catalyses the reaction alpha-D-glucosamine 1-phosphate + acetyl-CoA = N-acetyl-alpha-D-glucosamine 1-phosphate + CoA + H(+). The catalysed reaction is N-acetyl-alpha-D-glucosamine 1-phosphate + UTP + H(+) = UDP-N-acetyl-alpha-D-glucosamine + diphosphate. It functions in the pathway nucleotide-sugar biosynthesis; UDP-N-acetyl-alpha-D-glucosamine biosynthesis; N-acetyl-alpha-D-glucosamine 1-phosphate from alpha-D-glucosamine 6-phosphate (route II): step 2/2. The protein operates within nucleotide-sugar biosynthesis; UDP-N-acetyl-alpha-D-glucosamine biosynthesis; UDP-N-acetyl-alpha-D-glucosamine from N-acetyl-alpha-D-glucosamine 1-phosphate: step 1/1. It participates in bacterial outer membrane biogenesis; LPS lipid A biosynthesis. Catalyzes the last two sequential reactions in the de novo biosynthetic pathway for UDP-N-acetylglucosamine (UDP-GlcNAc). The C-terminal domain catalyzes the transfer of acetyl group from acetyl coenzyme A to glucosamine-1-phosphate (GlcN-1-P) to produce N-acetylglucosamine-1-phosphate (GlcNAc-1-P), which is converted into UDP-GlcNAc by the transfer of uridine 5-monophosphate (from uridine 5-triphosphate), a reaction catalyzed by the N-terminal domain. In Baumannia cicadellinicola subsp. Homalodisca coagulata, this protein is Bifunctional protein GlmU.